The following is a 186-amino-acid chain: Ribosome-recycling factor (186 aa).

It belongs to the RRF family.

It is found in the cytoplasm. Responsible for the release of ribosomes from messenger RNA at the termination of protein biosynthesis. May increase the efficiency of translation by recycling ribosomes from one round of translation to another. The protein is Ribosome-recycling factor of Cupriavidus necator (strain ATCC 17699 / DSM 428 / KCTC 22496 / NCIMB 10442 / H16 / Stanier 337) (Ralstonia eutropha).